Consider the following 445-residue polypeptide: N-succinylarginine dihydrolase (445 aa).

Substrate-binding positions include Ala-19–Ser-28, Asn-110, and His-137–Arg-138. Glu-174 is a catalytic residue. Arg-214 lines the substrate pocket. Residue His-250 is part of the active site. Substrate is bound by residues Asp-252 and Asn-363. The active-site Nucleophile is Cys-369.

This sequence belongs to the succinylarginine dihydrolase family. In terms of assembly, homodimer.

The catalysed reaction is N(2)-succinyl-L-arginine + 2 H2O + 2 H(+) = N(2)-succinyl-L-ornithine + 2 NH4(+) + CO2. The protein operates within amino-acid degradation; L-arginine degradation via AST pathway; L-glutamate and succinate from L-arginine: step 2/5. Catalyzes the hydrolysis of N(2)-succinylarginine into N(2)-succinylornithine, ammonia and CO(2). The sequence is that of N-succinylarginine dihydrolase from Aeromonas hydrophila subsp. hydrophila (strain ATCC 7966 / DSM 30187 / BCRC 13018 / CCUG 14551 / JCM 1027 / KCTC 2358 / NCIMB 9240 / NCTC 8049).